Reading from the N-terminus, the 172-residue chain is RNA silencing suppressor p19 (172 aa).

The segment covering 1-20 (MERAIQGNDTREQANGERWD) has biased composition (basic and acidic residues). Residues 1–27 (MERAIQGNDTREQANGERWDGGSGGIT) form a disordered region.

It belongs to the tombusvirus protein p19 family. In terms of assembly, homodimer.

Its function is as follows. Acts as a suppressor of RNA-mediated gene silencing, also known as post-transcriptional gene silencing (PTGS), a mechanism of plant viral defense that limits the accumulation of viral RNAs. Binds to short interfering RNAs (siRNAs) with high affinity. Acts as a molecular caliper to specifically select siRNAs based on the length of the duplex region of the RNA. The polypeptide is RNA silencing suppressor p19 (Dianthus caryophyllus (Carnation)).